The primary structure comprises 59 residues: Potassium channel toxin alpha-KTx 1.14 (59 aa).

The N-terminal stretch at 1 to 22 is a signal peptide; the sequence is MKKISFLLLLAIVICSIGWTDG. The residue at position 23 (glutamine 23) is a Pyrrolidone carboxylic acid. Intrachain disulfides connect cysteine 29–cysteine 50, cysteine 35–cysteine 55, and cysteine 39–cysteine 57.

The protein belongs to the short scorpion toxin superfamily. Potassium channel inhibitor family. Alpha-KTx 01 subfamily. Expressed by the venom gland.

Its subcellular location is the secreted. Potent blocker of both large-conductance calcium-activated potassium channels (KCa1.1/KCNMA1) and voltage-gated potassium channels (Kv1.3/KCNA3 and ERG1/Kv11.1/KCNH2). The protein is Potassium channel toxin alpha-KTx 1.14 of Olivierus martensii (Manchurian scorpion).